The sequence spans 569 residues: 5'-AMP-activated protein kinase subunit gamma-2 (569 aa).

The disordered stretch occupies residues 1–222 (MGSAVMDTKK…TRPPLASPTH (222 aa)). Phosphoserine occurs at positions 65, 71, 73, 90, 138, 143, 161, and 162. Low complexity predominate over residues 156–167 (TSGLSSSPSTPT). Threonine 165 is subject to Phosphothreonine. Residues 179 to 189 (SYKHEPERLEN) show a composition bias toward basic and acidic residues. The segment covering 192–212 (YASSSPPDTGQRFCPSSFQSP) has biased composition (polar residues). A Phosphoserine modification is found at serine 196. CBS domains lie at 275–335 (PTSS…KSPM), 357–415 (TFKP…MSDM), and 430–492 (IGTY…NLDI). Residues arginine 302, 317–322 (MLTITD), valine 362, 383–384 (HR), and lysine 402 contribute to the ADP site. Residues arginine 302, 317–322 (MLTITD), valine 362, histidine 383, 383–384 (HR), lysine 402, threonine 432, alanine 437, 458–459 (SA), 474–477 (SKFD), arginine 501, histidine 530, 530–531 (HR), and 546–549 (SLSD) contribute to the AMP site. Residues arginine 302, 317–322 (MLTITD), valine 362, 383–384 (HR), arginine 384, and lysine 402 contribute to the ATP site. The AMPK pseudosubstrate signature appears at 370–391 (LFDAVYSLIKNKIHRLPVIDPI). ADP-binding positions include 474 to 477 (SKFD), arginine 501, and 530 to 531 (HR). ATP is bound by residues 474–477 (SKFD), arginine 501, and 530–531 (HR). A CBS 4 domain is found at 504–562 (YFEGVVKCNKLEILETIVDRIVRAEVHRLVVVNEADSIVGIISLSDILQALILTPAGAK).

It belongs to the 5'-AMP-activated protein kinase gamma subunit family. In terms of assembly, AMPK is a heterotrimer of an alpha catalytic subunit (PRKAA1 or PRKAA2), a beta (PRKAB1 or PRKAB2) and a gamma non-catalytic subunits (PRKAG1, PRKAG2 or PRKAG3). Interacts with FNIP1 and FNIP2. Phosphorylated by ULK1; leading to negatively regulate AMPK activity and suggesting the existence of a regulatory feedback loop between ULK1 and AMPK. In terms of processing, glycosylated; O-GlcNAcylated by OGT, promoting the AMP-activated protein kinase (AMPK) activity. In terms of tissue distribution, isoform B is ubiquitously expressed except in liver and thymus. The highest level is detected in heart with abundant expression in placenta and testis.

Functionally, AMP/ATP-binding subunit of AMP-activated protein kinase (AMPK), an energy sensor protein kinase that plays a key role in regulating cellular energy metabolism. In response to reduction of intracellular ATP levels, AMPK activates energy-producing pathways and inhibits energy-consuming processes: inhibits protein, carbohydrate and lipid biosynthesis, as well as cell growth and proliferation. AMPK acts via direct phosphorylation of metabolic enzymes, and by longer-term effects via phosphorylation of transcription regulators. Also acts as a regulator of cellular polarity by remodeling the actin cytoskeleton; probably by indirectly activating myosin. Gamma non-catalytic subunit mediates binding to AMP, ADP and ATP, leading to activate or inhibit AMPK: AMP-binding results in allosteric activation of alpha catalytic subunit (PRKAA1 or PRKAA2) both by inducing phosphorylation and preventing dephosphorylation of catalytic subunits. ADP also stimulates phosphorylation, without stimulating already phosphorylated catalytic subunit. ATP promotes dephosphorylation of catalytic subunit, rendering the AMPK enzyme inactive. The sequence is that of 5'-AMP-activated protein kinase subunit gamma-2 (PRKAG2) from Homo sapiens (Human).